Consider the following 44-residue polypeptide: Photosystem I reaction center subunit IX (44 aa).

The chain crosses the membrane as a helical span at residues Y7–I27.

Belongs to the PsaJ family.

It is found in the plastid. It localises to the chloroplast thylakoid membrane. Its function is as follows. May help in the organization of the PsaE and PsaF subunits. This chain is Photosystem I reaction center subunit IX, found in Calycanthus floridus var. glaucus (Eastern sweetshrub).